Here is a 1714-residue protein sequence, read N- to C-terminus: Bifunctional glutamate/proline--tRNA ligase (1714 aa).

The segment at 166 to 191 (DAKVKRSPQSSKEQTPAKTGERKQEG) is disordered. Residues 170-754 (KRSPQSSKEQ…ASELDSQISQ (585 aa)) form a glutamate--tRNA ligase region. Over residues 172-182 (SPQSSKEQTPA) the composition is skewed to polar residues. A 'HIGH' region motif is present at residues 209–220 (PPEASGYLHIGH). Residues 438–442 (VLSKR) carry the 'KMSKS' region motif. Disordered stretches follow at residues 718 to 754 (PTSG…QISQ), 791 to 817 (GKDW…ANDA), and 943 to 962 (GTTA…EKNP). 2 stretches are compositionally biased toward low complexity: residues 734-746 (KASS…GQAS) and 800-817 (SASS…ANDA). WHEP-TRS domains lie at 744-800 (QASE…GQTS), 816-872 (DAVS…GTVP), 890-946 (SVAQ…GTTA), 969-1025 (TVNT…GTVA), and 1044-1100 (DVGS…DAKS). The segment at 755–1201 (QGDLVRDLKS…KPAKPVKKEP (447 aa)) is 6 X 57 AA approximate repeats. Disordered regions lie at residues 1093 to 1119 (DWTP…SPAK) and 1168 to 1210 (FPVA…GAVK). A compositionally biased stretch (basic and acidic residues) spans 1094–1109 (WTPDAKSEPAVVKKEA). S1110 carries the phosphoserine modification. One can recognise a WHEP-TRS 6 domain in the interval 1118–1174 (AKDELTQEINAQGEKVRAAKGNKAAKEVIDAEVAKLLALKAKYKEVTGTDFPVAGRG). Positions 1172–1181 (GRGGGGGGGS) are enriched in gly residues. Positions 1207–1714 (GAVKKQTRLG…KFYTLFGRSY (508 aa)) are proline--tRNA ligase. L-proline is bound by residues 1322-1324 (TSE) and R1353. Residues R1353, E1355, R1364, T1365, Q1438, and T1441 each contribute to the ATP site. Q1438 serves as a coordination point for Mg(2+). H1443 contributes to the L-proline binding site. 2 residues coordinate ATP: T1476 and R1478. Positions 1648, 1653, and 1695 each coordinate Zn(2+).

This sequence in the N-terminal section; belongs to the class-I aminoacyl-tRNA synthetase family. Glutamate--tRNA ligase type 2 subfamily. It in the C-terminal section; belongs to the class-II aminoacyl-tRNA synthetase family. Component of the multisynthetase complex which is comprised of a bifunctional glutamyl-prolyl-tRNA synthetase, the monospecific isoleucyl, leucyl, glutaminyl, methionyl, lysyl, arginyl, and aspartyl-tRNA synthetases as well as three auxiliary proteins, p18, p48 and p43.

The catalysed reaction is tRNA(Glu) + L-glutamate + ATP = L-glutamyl-tRNA(Glu) + AMP + diphosphate. It carries out the reaction tRNA(Pro) + L-proline + ATP = L-prolyl-tRNA(Pro) + AMP + diphosphate. Catalyzes the attachment of both L-glutamate and L-proline to their cognate tRNAs in a two-step reaction where the amino acid is first activated by ATP to form a covalent intermediate with AMP. Subsequently, the activated amino acid is transferred to the acceptor end of the cognate tRNA to form L-glutamyl-tRNA(Glu) and L-prolyl-tRNA(Pro). This is Bifunctional glutamate/proline--tRNA ligase from Drosophila melanogaster (Fruit fly).